The sequence spans 130 residues: Large ribosomal subunit protein bL21 (130 aa).

Residues 110–130 form a disordered region; that stretch reads TAPTATEETADATPDTETAAE.

The protein belongs to the bacterial ribosomal protein bL21 family. Part of the 50S ribosomal subunit. Contacts protein L20.

In terms of biological role, this protein binds to 23S rRNA in the presence of protein L20. The chain is Large ribosomal subunit protein bL21 from Nostoc sp. (strain PCC 7120 / SAG 25.82 / UTEX 2576).